Here is a 408-residue protein sequence, read N- to C-terminus: Argininosuccinate synthase (408 aa).

Residues 10–18 and A37 contribute to the ATP site; that span reads AYSGGLDTS. L-citrulline-binding residues include Y90 and S95. G120 provides a ligand contact to ATP. The L-aspartate site is built by T122, N126, and D127. N126 lines the L-citrulline pocket. 5 residues coordinate L-citrulline: R130, S182, S191, E267, and Y279.

The protein belongs to the argininosuccinate synthase family. Type 1 subfamily. Homotetramer.

Its subcellular location is the cytoplasm. It catalyses the reaction L-citrulline + L-aspartate + ATP = 2-(N(omega)-L-arginino)succinate + AMP + diphosphate + H(+). It participates in amino-acid biosynthesis; L-arginine biosynthesis; L-arginine from L-ornithine and carbamoyl phosphate: step 2/3. The sequence is that of Argininosuccinate synthase from Paraburkholderia xenovorans (strain LB400).